A 196-amino-acid polypeptide reads, in one-letter code: Chromophore lyase CpcT/CpeT (196 aa).

Belongs to the CpcT/CpeT biliprotein lyase family.

In terms of biological role, covalently attaches a chromophore to Cys residue(s) of phycobiliproteins. This Thermosynechococcus vestitus (strain NIES-2133 / IAM M-273 / BP-1) protein is Chromophore lyase CpcT/CpeT.